The primary structure comprises 48 residues: uncharacterized protein (48 aa).

The first 21 residues, 1–21 (MLENNVFRLMILMGGVIALIA), serve as a signal peptide directing secretion.

This is an uncharacterized protein from Bacillus anthracis.